Reading from the N-terminus, the 209-residue chain is MNEDLTNSTEYKRYGHDYAKYPRRIAEELQHYGGNSFANFFRDEGVLYKEILCDACDHLKVNYNEESATSLIEQNMLSKLLKDSLEKMSRREIKELCNELGMTNIDKVIGENKQVLIASTLTLFKAGGSHSYALAVSVADAMVRQTLGHXACYVVGKVALKKTLGVLAGPIGWVITGALVSINLAGPAYRVTVPACVLIATLRLKLKAK.

This sequence belongs to the UPF0174 family.

This chain is UPF0174 protein HP_1587, found in Helicobacter pylori (strain ATCC 700392 / 26695) (Campylobacter pylori).